The chain runs to 118 residues: Large ribosomal subunit protein bL17 (118 aa).

It belongs to the bacterial ribosomal protein bL17 family. In terms of assembly, part of the 50S ribosomal subunit. Contacts protein L32.

This chain is Large ribosomal subunit protein bL17, found in Aster yellows witches'-broom phytoplasma (strain AYWB).